Here is a 468-residue protein sequence, read N- to C-terminus: Peroxisome proliferator-activated receptor alpha (468 aa).

Residues 99 to 173 (NIECRICGDK…VGMSHNAIRF (75 aa)) constitute a DNA-binding region (nuclear receptor). 2 consecutive NR C4-type zinc fingers follow at residues 102-122 (CRIC…CEGC) and 139-161 (CDRS…FHKC). One can recognise an NR LBD domain in the interval 239-466 (FVIHDMETLC…HPLLQEIYRD (228 aa)). The segment at 304-433 (DQVTLLKYGV…PKLLQKMVDL (130 aa)) is required for heterodimerization with RXRA.

The protein belongs to the nuclear hormone receptor family. NR1 subfamily. Heterodimer; with RXRA. This heterodimerization is required for DNA binding and transactivation activity. Interacts with NCOA3 coactivator. Interacts with CITED2; the interaction stimulates its transcriptional activity. Also interacts with PPARBP in vitro. Interacts with AKAP13, LPIN1, PRDM16 and coactivator NCOA6. Interacts with ASXL1 and ASXL2. Interacts with PER2. Interacts with SIRT1; the interaction seems to be modulated by NAD(+) levels. Interacts with CRY1 and CRY2. In hepatocytes, interacts with PAQR3 and HUWE1; the interactions promote PPARA poylubiquitination and HUWE1-mediated degradation. In terms of processing, ubiquitinated by E3 ubiquitin-protein ligase HUWE1; leading to proteasomal degradation. Phosphorylated. Highly expressed in liver, kidney and heart. Very weakly expressed in brain and testis.

It is found in the nucleus. Its function is as follows. Ligand-activated transcription factor. Key regulator of lipid metabolism. Activated by the endogenous ligand 1-palmitoyl-2-oleoyl-sn-glycerol-3-phosphocholine (16:0/18:1-GPC). Activated by oleylethanolamide, a naturally occurring lipid that regulates satiety. Receptor for peroxisome proliferators such as hypolipidemic drugs and fatty acids. Regulates the peroxisomal beta-oxidation pathway of fatty acids. Functions as a transcription activator for the ACOX1 and P450 genes. Transactivation activity requires heterodimerization with RXRA and is antagonized by NR2C2. May be required for the propagation of clock information to metabolic pathways regulated by PER2. This is Peroxisome proliferator-activated receptor alpha (Ppara) from Mus musculus (Mouse).